Consider the following 776-residue polypeptide: Homoaconitase, mitochondrial (776 aa).

The N-terminal 38 residues, Met1–Phe38, are a transit peptide targeting the mitochondrion. The [4Fe-4S] cluster site is built by Cys394, Cys463, and Cys466.

Belongs to the aconitase/IPM isomerase family. Requires [4Fe-4S] cluster as cofactor.

Its subcellular location is the mitochondrion. It catalyses the reaction (2R,3S)-homoisocitrate = cis-homoaconitate + H2O. The protein operates within amino-acid biosynthesis; L-lysine biosynthesis via AAA pathway; L-alpha-aminoadipate from 2-oxoglutarate: step 3/5. Its function is as follows. Catalyzes the reversible hydration of cis-homoaconitate to (2R,3S)-homoisocitrate, a step in the alpha-aminoadipate pathway for lysine biosynthesis. This is Homoaconitase, mitochondrial (lys4) from Emericella nidulans (strain FGSC A4 / ATCC 38163 / CBS 112.46 / NRRL 194 / M139) (Aspergillus nidulans).